The primary structure comprises 64 residues: Large ribosomal subunit protein uL29 (64 aa).

The protein belongs to the universal ribosomal protein uL29 family.

This is Large ribosomal subunit protein uL29 from Nitrosomonas europaea (strain ATCC 19718 / CIP 103999 / KCTC 2705 / NBRC 14298).